Here is a 210-residue protein sequence, read N- to C-terminus: Large ribosomal subunit protein uL3 (210 aa).

Positions 125 to 151 (RHGQSRGPMSHGSRYHRRPGSMGPVAP) are disordered.

The protein belongs to the universal ribosomal protein uL3 family. As to quaternary structure, part of the 50S ribosomal subunit. Forms a cluster with proteins L14 and L19.

Its function is as follows. One of the primary rRNA binding proteins, it binds directly near the 3'-end of the 23S rRNA, where it nucleates assembly of the 50S subunit. In Bacillus cereus (strain ATCC 14579 / DSM 31 / CCUG 7414 / JCM 2152 / NBRC 15305 / NCIMB 9373 / NCTC 2599 / NRRL B-3711), this protein is Large ribosomal subunit protein uL3.